The sequence spans 181 residues: HGPRTase-like protein 2 (181 aa).

This sequence belongs to the purine/pyrimidine phosphoribosyltransferase family. Archaeal HPRT subfamily.

May catalyze a purine salvage reaction, the substrate is unknown. In Haloferax volcanii (strain ATCC 29605 / DSM 3757 / JCM 8879 / NBRC 14742 / NCIMB 2012 / VKM B-1768 / DS2) (Halobacterium volcanii), this protein is HGPRTase-like protein 2.